Reading from the N-terminus, the 599-residue chain is DNA-directed RNA polymerase III subunit RPC3 (599 aa).

The segment at 335–371 (PRLDGLRPRGKGSRSVSPRPQSKRVKTEEGYTKTGDY) is disordered. A compositionally biased stretch (basic and acidic residues) spans 359–371 (VKTEEGYTKTGDY). The interval 526–547 (IYKSLSRCFERVAAERAKLPIL) is leucine-zipper.

Belongs to the RNA polymerase beta chain family. As to quaternary structure, component of the RNA polymerase III (Pol III) complex consisting of 17 subunits.

Its subcellular location is the nucleus. In terms of biological role, DNA-dependent RNA polymerase catalyzes the transcription of DNA into RNA using the four ribonucleoside triphosphates as substrates. Specific core component of RNA polymerase III which synthesizes small RNAs, such as 5S rRNA and tRNAs. The chain is DNA-directed RNA polymerase III subunit RPC3 (RPC82) from Yarrowia lipolytica (strain CLIB 122 / E 150) (Yeast).